The chain runs to 454 residues: Lipase member H (454 aa).

The N-terminal stretch at 1-23 (MIYRKIIWGILYVTLMLFDTHRA) is a signal peptide. N73, N137, and N151 each carry an N-linked (GlcNAc...) asparagine glycan. S161 acts as the Nucleophile in catalysis. D185 functions as the Charge relay system in the catalytic mechanism. C240 and C253 form a disulfide bridge. H255 acts as the Charge relay system in catalysis. N267 carries N-linked (GlcNAc...) asparagine glycosylation. Intrachain disulfides connect C277-C288 and C291-C299. N358 carries an N-linked (GlcNAc...) asparagine glycan. Cysteines 430 and 449 form a disulfide.

The protein belongs to the AB hydrolase superfamily. Lipase family.

The protein localises to the secreted. It is found in the cell membrane. It catalyses the reaction 1-hexadecanoyl-2-(9Z-octadecenoyl)-sn-glycero-3-phosphate + H2O = 2-(9Z-octadecenoyl)-sn-glycero-3-phosphate + hexadecanoate + H(+). Hydrolyzes specifically phosphatidic acid (PA) to produce 2-acyl lysophosphatidic acid (LPA; a potent bioactive lipid mediator) and fatty acid. Does not hydrolyze other phospholipids, like phosphatidylserine (PS), phosphatidylcholine (PC) and phosphatidylethanolamine (PE) or triacylglycerol (TG). This chain is Lipase member H (liph), found in Danio rerio (Zebrafish).